Consider the following 337-residue polypeptide: Manganese-dependent ADP-ribose/CDP-alcohol diphosphatase (337 aa).

N-acetylmethionine is present on Met-1. Residues Asp-25, Gln-27, Asp-74, Asn-110, His-241, His-278, and His-280 each coordinate Zn(2+).

The protein belongs to the ADPRibase-Mn family. As to quaternary structure, monomer. It depends on Mg(2+) as a cofactor.

It catalyses the reaction CDP-choline + H2O = phosphocholine + CMP + 2 H(+). It carries out the reaction ADP-D-ribose + H2O = D-ribose 5-phosphate + AMP + 2 H(+). The catalysed reaction is CDP-glycerol + H2O = sn-glycerol 3-phosphate + CMP + 2 H(+). Its function is as follows. Hydrolyzes ADP-ribose, IDP-ribose, CDP-glycerol, CDP-choline and CDP-ethanolamine, but not other non-reducing ADP-sugars or CDP-glucose. May be involved in immune cell signaling as suggested by the second-messenger role of ADP-ribose, which activates TRPM2 as a mediator of oxidative/nitrosative stress. This Bos taurus (Bovine) protein is Manganese-dependent ADP-ribose/CDP-alcohol diphosphatase (ADPRM).